Here is a 125-residue protein sequence, read N- to C-terminus: Basic leucine zipper transcriptional factor ATF-like (125 aa).

Low complexity predominate over residues 1–14 (MPHSSDSSDSSFSR). The interval 1-58 (MPHSSDSSDSSFSRSPPPGKQDSSDDVRRVQRREKNRIAAQKSRQRQTQKADTLHLES) is disordered. Positions 26–89 (DVRRVQRREK…KYFTSVLNSH (64 aa)) constitute a bZIP domain. A basic motif region spans residues 28–50 (RRVQRREKNRIAAQKSRQRQTQK). S43 carries the post-translational modification Phosphoserine. The residue at position 48 (T48) is a Phosphothreonine. The interval 54 to 75 (LHLESEDLEKQNAALRKEIKQL) is leucine-zipper.

Belongs to the bZIP family. Heterodimer; mainly heterodimerizes with JUNB. The BATF-JUNB heterodimer interacts with IRF4 and IRF8. Interacts (via bZIP domain) with IRF4 and IRF8; the interaction is direct. Also forms heterodimers with JUN and JUND. Also interacts with IFI35. Phosphorylated on serine and threonine residues and at least one tyrosine residue. Phosphorylation at Ser-43 inhibit DNA binding activity and transforms it as a negative regulator of AP-1 mediated transcription. Post-translationally, phosphorylated. In terms of tissue distribution, expressed at highest levels in lung, and at lower levels in placenta, liver, kidney, spleen, and peripheral blood. Detected in SW480 colorectal cancer cell line and several hematopoietic tumor cell lines, including Raji Burkitt's lymphoma. Strongly expressed in mature B- and T-lymphocytes. Also expressed in moderate levels in lymph node and appendix and at low levels in thymus and bone marrow.

Its subcellular location is the nucleus. It localises to the cytoplasm. Its function is as follows. AP-1 family transcription factor that controls the differentiation of lineage-specific cells in the immune system: specifically mediates the differentiation of T-helper 17 cells (Th17), follicular T-helper cells (TfH), CD8(+) dendritic cells and class-switch recombination (CSR) in B-cells. Acts via the formation of a heterodimer with JUNB that recognizes and binds DNA sequence 5'-TGA[CG]TCA-3'. The BATF-JUNB heterodimer also forms a complex with IRF4 (or IRF8) in immune cells, leading to recognition of AICE sequence (5'-TGAnTCA/GAAA-3'), an immune-specific regulatory element, followed by cooperative binding of BATF and IRF4 (or IRF8) and activation of genes. Controls differentiation of T-helper cells producing interleukin-17 (Th17 cells) by binding to Th17-associated gene promoters: regulates expression of the transcription factor RORC itself and RORC target genes such as IL17 (IL17A or IL17B). Also involved in differentiation of follicular T-helper cells (TfH) by directing expression of BCL6 and MAF. In B-cells, involved in class-switch recombination (CSR) by controlling the expression of both AICDA and of germline transcripts of the intervening heavy-chain region and constant heavy-chain region (I(H)-C(H)). Following infection, can participate in CD8(+) dendritic cell differentiation via interaction with IRF4 and IRF8 to mediate cooperative gene activation. Regulates effector CD8(+) T-cell differentiation by regulating expression of SIRT1. Following DNA damage, part of a differentiation checkpoint that limits self-renewal of hematopoietic stem cells (HSCs): up-regulated by STAT3, leading to differentiation of HSCs, thereby restricting self-renewal of HSCs. The polypeptide is Basic leucine zipper transcriptional factor ATF-like (BATF) (Homo sapiens (Human)).